An 88-amino-acid polypeptide reads, in one-letter code: Long neurotoxin LNTX-1 (88 aa).

A signal peptide spans 1–21; sequence MKTLLLTLVVVTIVCLDFGYA. 5 disulfides stabilise this stretch: C24–C42, C35–C63, C48–C52, C67–C78, and C79–C84.

Belongs to the three-finger toxin family. Long-chain subfamily. Type II alpha-neurotoxin sub-subfamily. In terms of tissue distribution, expressed by the venom gland.

It is found in the secreted. In terms of biological role, binds with high affinity to muscular (alpha-1/CHRNA1) and neuronal (alpha-7/CHRNA7) nicotinic acetylcholine receptor (nAChR) and inhibits acetylcholine from binding to the receptor, thereby impairing neuromuscular and neuronal transmission. The polypeptide is Long neurotoxin LNTX-1 (Demansia vestigiata (Lesser black whip snake)).